Here is a 119-residue protein sequence, read N- to C-terminus: Spermidine export protein MdtJ (119 aa).

4 consecutive transmembrane segments (helical) span residues 1 to 21 (MIYW…TLAL), 31 to 51 (AGFI…SFSV), 54 to 74 (IALG…ITLF), and 81 to 101 (ETLT…ILLI).

It belongs to the drug/metabolite transporter (DMT) superfamily. Small multidrug resistance (SMR) (TC 2.A.7.1) family. MdtJ subfamily. Forms a complex with MdtI.

It localises to the cell inner membrane. Catalyzes the excretion of spermidine. The protein is Spermidine export protein MdtJ (mdtJ) of Cronobacter sakazakii (strain ATCC BAA-894) (Enterobacter sakazakii).